A 650-amino-acid polypeptide reads, in one-letter code: Acetoacetyl-coenzyme A synthetase (650 aa).

199–202 (YNGK) is a CoA binding site. Residues 392 to 394 (GSP), Asp-504, Arg-519, and Arg-530 each bind ATP. Val-546 provides a ligand contact to Mg(2+). Arg-587 is a CoA binding site. Lys-612 bears the N6-acetyllysine mark.

The protein belongs to the ATP-dependent AMP-binding enzyme family. Mg(2+) is required as a cofactor. Post-translationally, acetylated. Deacetylation by the SIR2-homolog deacetylase activates the enzyme.

It catalyses the reaction acetoacetate + ATP + CoA = acetoacetyl-CoA + AMP + diphosphate. It functions in the pathway biopolymer metabolism; poly-(R)-3-hydroxybutanoate degradation. Functionally, catalyzes the conversion of acetoacetate into acetoacetyl-CoA. Is involved in poly-3-hydroxybutyrate (PHB) degradation, which allows growth of R.meliloti on PHB cycle intermediates. The sequence is that of Acetoacetyl-coenzyme A synthetase from Rhizobium meliloti (strain 1021) (Ensifer meliloti).